The following is a 2426-amino-acid chain: Protein SON (2426 aa).

A2 is modified (N-acetylalanine). K16 is subject to N6-acetyllysine. Residues 24–42 (LSSGRNEGQLNGETNTPIE) show a composition bias toward polar residues. The segment at 24–56 (LSSGRNEGQLNGETNTPIEGNQAGDAAASARSL) is disordered. K64 participates in a covalent cross-link: Glycyl lysine isopeptide (Lys-Gly) (interchain with G-Cter in SUMO2). Residues 77 to 88 (LRYKPDLKEGSR) show a composition bias toward basic and acidic residues. Residues 77–155 (LRYKPDLKEG…GNIDLESDSF (79 aa)) are disordered. S94 is subject to Phosphoserine. A compositionally biased stretch (basic residues) spans 106 to 130 (KKSKKHKKHKNKKKKKKKEKEKKYK). The segment covering 131–146 (RQPEESESKTKSHDDG) has biased composition (basic and acidic residues). Residues S142, S152, S154, S160, and S283 each carry the phosphoserine modification. Position 288 is an N6-acetyllysine (K288). The tract at residues 305 to 328 (TLVVSSETPTEVYPEPSTSTTMDF) is disordered. T400 is subject to Phosphothreonine. Residues 406-442 (PGPSATPVPELPGPLSTPVPELPGPPATAVPELPGPS) form a disordered region. Residues 409-442 (SATPVPELPGPLSTPVPELPGPPATAVPELPGPS) are compositionally biased toward pro residues. Residues 726–895 (LASNTMDSQM…LASGTMDAQM (170 aa)) are 17 X 10 AA tandem repeats of L-A-[ST]-[NSG]-[TS]-MDSQM. An 11 X 7 AA tandem repeats of [DR]-P-Y-R-[LI][AG][QHP] region spans residues 912-988 (DPYRLAQDPY…IAPRPYRLAP (77 aa)). R950 bears the Omega-N-methylarginine mark. T959 is subject to Phosphothreonine. S998 bears the Phosphoserine mark. 14 tandem repeats follow at residues 1006-1011 (ERSMMS), 1014-1019 (ERSMMS), 1021-1026 (ERSMMS), 1030-1035 (ERSMMS), 1038-1043 (ERSMMS), 1046-1051 (ERSMMS), 1055-1060 (ERSMMS), 1063-1068 (ERSMMS), 1071-1076 (ERSMMS), 1080-1085 (DRSMMS), 1089-1094 (DRSMMS), 1100-1105 (DRSMMS), 1111-1116 (DRSMMS), and 1121-1126 (DRSMMS). The 14 X 6 AA repeats of [ED]-R-S-M-M-S stretch occupies residues 1006-1126 (ERSMMSSYER…SYTADRSMMS (121 aa)). At R1007 the chain carries Asymmetric dimethylarginine. Residue R1022 is modified to Asymmetric dimethylarginine. A phosphoserine mark is found at S1035 and S1043. A phosphoserine mark is found at S1060 and S1068. A Phosphoserine modification is found at S1082. The disordered stretch occupies residues 1144–1236 (YMVPPLPPEE…PTDYSVSASD (93 aa)). The interval 1147–1179 (PPLPPEEPPTMPPLPPEEPPMTPPLPPEEPPEG) is 3 X 11 AA tandem repats of P-P-L-P-P-E-E-P-P-[TME]-[MTG]. Residues 1147-1180 (PPLPPEEPPTMPPLPPEEPPMTPPLPPEEPPEGP) show a composition bias toward pro residues. Residues 1186 to 1196 (QSALTAENTWP) are compositionally biased toward polar residues. Over residues 1198-1224 (EVPSSPSEESVSQPEPPVSQSEISEPS) the composition is skewed to low complexity. The 4 X 8 AA tandem repeats of V-L-E-SS-[AVT]-VT stretch occupies residues 1359 to 1390 (VLESSAVTVLESSTVTVLESSTVTVLEPSVVT). A phosphoserine mark is found at S1556 and S1651. Residues 1645–1722 (TSPSGGSEAD…KETLPDSGFS (78 aa)) form a disordered region. The segment covering 1677 to 1689 (KDTEEPLPVKESD) has biased composition (basic and acidic residues). Phosphoserine is present on residues S1697, S1701, S1747, S1759, S1766, S1769, S1782, and S1783. Residues 1754-2054 (GPLLASDVGR…RSPKRLTDLD (301 aa)) are disordered. Basic and acidic residues-rich tracts occupy residues 1790–1801 (YEIFVKVKDTHE), 1809–1822 (RDKGEKEKKRDSSL), and 1830–1845 (KSSEHKSRKRTSESRS). 2 stretches are compositionally biased toward basic residues: residues 1846–1909 (RARK…RKRS) and 1917–1948 (TVRARSRTPSRRSRSHTPSRRRRSRSVGRRRS). A run of 9 repeats spans residues 1925-1931 (PSRRSRS), 1934-1952 (PSRRRRSRSVGRRRSFSIS), 1953-1959 (PSRRSRT), 1960-1966 (PSRRSRT), 1967-1973 (PSRRSRT), 1974-1980 (PSRRSRT), 1981-1987 (PSRRSRT), 1988-1994 (PSRRSRT), and 1995-2013 (PSRRRRSRSVVRRRSFSIS). Residues 1925-1994 (PSRRSRSHTP…SRTPSRRSRT (70 aa)) form a 7 X 7 AA repeats of P-S-R-R-S-R-[TS] region. Residues 1934–2013 (PSRRRRSRSV…VVRRRSFSIS (80 aa)) are 2 X 19 AA repeats of P-S-R-R-R-R-S-R-S-V-V-R-R-R-S-F-S-I-S. S1948, S1950, and S1952 each carry phosphoserine. The segment covering 1955–2009 (RRSRTPSRRSRTPSRRSRTPSRRSRTPSRRSRTPSRRSRTPSRRRRSRSVVRRRS) has biased composition (basic residues). Phosphoserine occurs at positions 2009, 2011, 2013, 2029, and 2031. Residues 2013-2039 (SPVRLRRSRTPLRRRFSRSPIRRKRSR) form a 3 X tandem repeats of [ST]-P-[VLI]-R-[RL]-[RK]-[RF]-S-R region. The span at 2016-2038 (RLRRSRTPLRRRFSRSPIRRKRS) shows a compositional bias: basic residues. The span at 2039–2054 (RSSERGRSPKRLTDLD) shows a compositional bias: basic and acidic residues. K2055 bears the N6-acetyllysine; alternate mark. K2055 is covalently cross-linked (Glycyl lysine isopeptide (Lys-Gly) (interchain with G-Cter in SUMO2); alternate). Residue K2092 forms a Glycyl lysine isopeptide (Lys-Gly) (interchain with G-Cter in SUMO2) linkage. S2129 bears the Phosphoserine mark. A Glycyl lysine isopeptide (Lys-Gly) (interchain with G-Cter in SUMO2) cross-link involves residue K2149. T2163 is subject to Phosphothreonine. The interval 2200–2220 (KNGEENKDDDNVFSSNLPSEP) is disordered. Phosphoserine is present on S2238. Residues 2305-2351 (TGGMGAVLMRKMGWREGEGLGKNKEGNKEPILVDFKTDRKGLVAVGE) form the G-patch domain. In terms of domain architecture, DRBM spans 2371-2426 (HPVSALMEICNKRRWQPPEFLLVHDSGPDHRKHFLFRVLRNGALTRPNCMFFLNRY).

In terms of assembly, interacts with SRSF2. Associates with the spliceosome. Interacts with the AML1-MTG8 (AML1-ETO) fusion protein, possibly leading to trigger signals inhibiting leukemogenesis. Interacts with USH1G. In terms of tissue distribution, widely expressed, with the higher expression seen in leukocyte and heart.

Its subcellular location is the nucleus speckle. RNA-binding protein that acts as a mRNA splicing cofactor by promoting efficient splicing of transcripts that possess weak splice sites. Specifically promotes splicing of many cell-cycle and DNA-repair transcripts that possess weak splice sites, such as TUBG1, KATNB1, TUBGCP2, AURKB, PCNT, AKT1, RAD23A, and FANCG. Probably acts by facilitating the interaction between Serine/arginine-rich proteins such as SRSF2 and the RNA polymerase II. Also binds to DNA; binds to the consensus DNA sequence: 5'-GA[GT]AN[CG][AG]CC-3'. May indirectly repress hepatitis B virus (HBV) core promoter activity and transcription of HBV genes and production of HBV virions. Essential for correct RNA splicing of multiple genes critical for brain development, neuronal migration and metabolism, including TUBG1, FLNA, PNKP, WDR62, PSMD3, PCK2, PFKL, IDH2, and ACY1. This Homo sapiens (Human) protein is Protein SON (SON).